A 354-amino-acid chain; its full sequence is MLWVDKYRPKSLDKVIVHEDIAQKLKKLVSEQDCPHLLFYGPSGSGKKTLIMALLKQIYGASAEKVKVENRAWKVDAGSRTIDLELTTLSSTNHVELTPSDAGFQDRYIVQEIIKEMAKNRPIDTKGKKGYKVLVLNEVDKLSREAQHSLRRTMEKYSSSCRLILCCNSSSKVTEAIKSRCLNVRINAPSQEEIVKVLEFVAKKESLQLPQGFAARIAEKSNRSLRRAILSLETCRVQNYPFTGNQVISPMDWEEYVAEIATDMMKEQSPKKLFQVRGKVYELLVNCIPPEVILKRLLHELLKKLDSELKLEVCHWAAYYEHRMRLGQKAIFHIEAFVAKFMSIYKNFLISTFG.

41–48 (GPSGSGKK) is a binding site for ATP.

This sequence belongs to the activator 1 small subunits family. As to quaternary structure, heterotetramer of subunits RFC2, RFC3, RFC4 and RFC5 that can form a complex with RFC1.

Its subcellular location is the nucleus. Its function is as follows. May be involved in DNA replication and thus regulate cell proliferation. This Arabidopsis thaliana (Mouse-ear cress) protein is Replication factor C subunit 3 (RFC3).